Reading from the N-terminus, the 245-residue chain is Type I iodothyronine deiodinase (245 aa).

Residues L1–K9 lie on the Extracellular side of the membrane. A helical; Signal-anchor for type III membrane protein transmembrane segment spans residues L10–F30. The Cytoplasmic portion of the chain corresponds to P31–K245. Residue U123 is part of the active site. Position 123 (U123) is a non-standard amino acid, selenocysteine.

This sequence belongs to the iodothyronine deiodinase family. As to quaternary structure, predominantly monomer. Can form homodimers but homodimerization is not essential for enzyme activity.

It is found in the cell membrane. The protein localises to the endoplasmic reticulum membrane. It localises to the basolateral cell membrane. It catalyses the reaction 3,3',5-triiodo-L-thyronine + iodide + A + H(+) = L-thyroxine + AH2. It carries out the reaction 3,3',5'-triiodo-L-thyronine + iodide + A + H(+) = L-thyroxine + AH2. The catalysed reaction is 3,3'-diiodo-L-thyronine + iodide + A + H(+) = 3,3',5'-triiodo-L-thyronine + AH2. The enzyme catalyses 3,3'-diiodo-L-thyronine + iodide + A + H(+) = 3,3',5-triiodo-L-thyronine + AH2. It catalyses the reaction 3'-iodo-L-thyronine + iodide + A + H(+) = 3',5'-diiodo-L-thyronine + AH2. It carries out the reaction 3-iodo-L-thyronine + iodide + A + H(+) = 3,5-diiodo-L-thyronine + AH2. The catalysed reaction is 3-iodo-L-thyronine + iodide + A + H(+) = 3,3'-diiodo-L-thyronine + AH2. The enzyme catalyses 3,3'-diiodothyronamine + iodide + A + H(+) = 3,3',5'-triiodothyronamine + AH2. It catalyses the reaction 3'-iodothyronamine + iodide + A + H(+) = 3',5'-diiodothyronamine + AH2. It carries out the reaction 3-iodothyronamine + iodide + A + H(+) = 3,3'-diiodothyronamine + AH2. The catalysed reaction is 3,3'-diiodothyronamine + iodide + A + H(+) = 3,3',5-triiodothyronamine + AH2. The enzyme catalyses 3-iodothyronamine + iodide + A + H(+) = 3,5-diiodothyronamine + AH2. It catalyses the reaction 3,3'-diiodo-L-thyronine sulfate + iodide + A + H(+) = 3,3',5'-triiodo-L-thyronine sulfate + AH2. It carries out the reaction 3,3',5'-triiodo-L-thyronine sulfate + iodide + A + H(+) = L-thyroxine sulfate + AH2. The catalysed reaction is 3,3'-diiodo-L-thyronine sulfate + iodide + A + H(+) = 3,3',5-triiodo-L-thyronine sulfate + AH2. Functionally, plays a crucial role in the metabolism of thyroid hormones (TH) and has specific roles in TH activation and inactivation by deiodination. Catalyzes the deiodiantion of L-thyroxine (T4) to 3,5,3'-triiodothyronine (T3) and 3,3',5'-triiodothyronine (rT3) to 3,3'-diiodothyronine (3,3'-T2) via outer-ring deiodination (ORD). Catalyzes the deiodiantion of T4 to rT3, T3 to 3,3'-T2, 3,5-diiodothyronine (3,5-T2) to 3-monoiodothyronine (3-T1) and 3,3'-T2 to 3-T1 via inner-ring deiodination (IRD). Catalyzes the deiodiantion of 3',5'-diiodothyronine (3',5'-T2) to 3'-monoiodothyronine (3'-T1) via ORD. Catalyzes the phenolic ring deiodinations of 3,3',5'-triiodothyronamine, 3',5'-diiodothyronamine and 3,3'-diiodothyronamine as well as tyrosyl ring deiodinations of 3,5,3'-triiodothyronamine and 3,5-diiodothyronamine. Catalyzes the deiodination of L-thyroxine sulfate and 3,3',5-triiodo-L-thyronine sulfate via IRD and of 3,3',5'-triiodo-L-thyronine sulfate via ORD. This Gallus gallus (Chicken) protein is Type I iodothyronine deiodinase (DIO1).